We begin with the raw amino-acid sequence, 166 residues long: 16S rRNA aminocarboxypropyltransferase (166 aa).

5 residues coordinate S-adenosyl-L-methionine: Thr-17, Ile-62, Leu-84, Tyr-99, and Ser-103.

The protein belongs to the TDD superfamily. TSR3 family.

The protein localises to the cytoplasm. The enzyme catalyses an N(1)-methylpseudouridine in rRNA + S-adenosyl-L-methionine = N(1)-methyl-N(3)-[(3S)-3-amino-3-carboxypropyl]pseudouridine in rRNA + S-methyl-5'-thioadenosine + H(+). Its function is as follows. Aminocarboxypropyltransferase that catalyzes the aminocarboxypropyl transfer on pseudouridine corresponding to position 914 in M.jannaschii 16S rRNA. It constitutes the last step in biosynthesis of the hypermodified N1-methyl-N3-(3-amino-3-carboxypropyl) pseudouridine (m1acp3-Psi). This is 16S rRNA aminocarboxypropyltransferase from Saccharolobus islandicus (strain M.16.27) (Sulfolobus islandicus).